Consider the following 164-residue polypeptide: Photosystem II extrinsic protein V (164 aa).

A signal peptide spans 1-27 (MNRISIYRIKVLAFLFAVSTYVYPASS). Heme c contacts are provided by Cys64, Cys67, His68, and His119.

Belongs to the cytochrome c family. PsbV subfamily. PSII is composed of 1 copy each of membrane proteins PsbA, PsbB, PsbC, PsbD, PsbE, PsbF, PsbH, PsbI, PsbJ, PsbK, PsbL, PsbM, PsbT, PsbY, PsbZ, Psb30/Ycf12, at least 3 peripheral proteins of the oxygen-evolving complex and a large number of cofactors. It forms dimeric complexes. The extrinsic subunits in red algae are PsbO (OEC33), PsbQ', cytochrome c-550 and PsbU. The cofactor is heme c.

The protein localises to the plastid. Its subcellular location is the chloroplast thylakoid membrane. One of the extrinsic, lumenal subunits of photosystem II (PSII). PSII is a light-driven water plastoquinone oxidoreductase, using light energy to abstract electrons from H(2)O, generating a proton gradient subsequently used for ATP formation. The extrinsic proteins stabilize the structure of photosystem II oxygen-evolving complex (OEC), the ion environment of oxygen evolution and protect the OEC against heat-induced inactivation. This Cyanidium caldarium (Red alga) protein is Photosystem II extrinsic protein V.